The primary structure comprises 248 residues: NADP-dependent 3-hydroxy acid dehydrogenase YdfG (248 aa).

NADP(+) contacts are provided by residues 7–12 (GATAGF), 32–33 (RR), 54–55 (DV), and Asn-81. Ser-134 contacts substrate. NADP(+) is bound by residues Tyr-147, Lys-151, and 177–185 (PGLVGGTEF). The active-site Proton acceptor is the Tyr-147.

This sequence belongs to the short-chain dehydrogenases/reductases (SDR) family. In terms of assembly, homotetramer.

It carries out the reaction 3-hydroxypropanoate + NADP(+) = 3-oxopropanoate + NADPH + H(+). The catalysed reaction is L-allo-threonine + NADP(+) = aminoacetone + CO2 + NADPH. In terms of biological role, NADP-dependent dehydrogenase with broad substrate specificity acting on 3-hydroxy acids. Catalyzes the NADP-dependent oxidation of L-allo-threonine to L-2-amino-3-keto-butyrate, which is spontaneously decarboxylated into aminoacetone. Also acts on D-threonine, L-serine, D-serine, D-3-hydroxyisobutyrate, L-3-hydroxyisobutyrate, D-glycerate and L-glycerate. Able to catalyze the reduction of the malonic semialdehyde to 3-hydroxypropionic acid. YdfG is apparently supplementing RutE, the presumed malonic semialdehyde reductase involved in pyrimidine degradation since both are able to detoxify malonic semialdehyde. The polypeptide is NADP-dependent 3-hydroxy acid dehydrogenase YdfG (Escherichia coli (strain K12)).